Consider the following 61-residue polypeptide: Small ribosomal subunit protein uS14 (61 aa).

The Zn(2+) site is built by cysteine 24, cysteine 27, cysteine 40, and cysteine 43.

The protein belongs to the universal ribosomal protein uS14 family. Zinc-binding uS14 subfamily. Part of the 30S ribosomal subunit. Contacts proteins S3 and S10. Zn(2+) serves as cofactor.

In terms of biological role, binds 16S rRNA, required for the assembly of 30S particles and may also be responsible for determining the conformation of the 16S rRNA at the A site. In Roseiflexus sp. (strain RS-1), this protein is Small ribosomal subunit protein uS14.